Reading from the N-terminus, the 354-residue chain is Variable large protein 15/16 (354 aa).

The signal sequence occupies residues 1–18 (MRKRISAIIMTLFMVLVS). A lipid anchor (N-palmitoyl cysteine) is attached at Cys-19. The S-diacylglycerol cysteine moiety is linked to residue Cys-19. The disordered stretch occupies residues 333–354 (EDKSVEATNTAEATTSGQQAKN). The segment covering 338–354 (EATNTAEATTSGQQAKN) has biased composition (polar residues).

It belongs to the variable large protein (Vlp) family. Delta subfamily.

Its subcellular location is the cell outer membrane. The Vlp and Vsp proteins are antigenically distinct proteins, only one vlp or vsp gene is transcriptionally active at any one time. Switching between these genes is a mechanism of host immune response evasion. This chain is Variable large protein 15/16, found in Borrelia hermsii.